Here is a 323-residue protein sequence, read N- to C-terminus: Transposase for insertion sequence element IS6120 (323 aa).

The disordered stretch occupies residues 300–323 (ERPTDITPPTSPSDGGQHAGTEVA). A compositionally biased stretch (low complexity) spans 304 to 313 (DITPPTSPSD).

The protein belongs to the transposase mutator family.

Its function is as follows. Required for the transposition of the insertion element. The polypeptide is Transposase for insertion sequence element IS6120 (Mycolicibacterium smegmatis (Mycobacterium smegmatis)).